Reading from the N-terminus, the 152-residue chain is Nucleoplasmin-like protein (152 aa).

Residues 109 to 128 (EVVDMEEDDEEDDVAEDEED) are compositionally biased toward acidic residues. Positions 109-152 (EVVDMEEDDEEDDVAEDEEDEHPKKRAKIENAADGKNAKNNKKK) are disordered. The segment covering 136 to 145 (KIENAADGKN) has biased composition (basic and acidic residues).

The protein belongs to the nucleoplasmin family. As to quaternary structure, decamer formed by two pentameric rings associated in a head-to-head fashion.

The protein localises to the nucleus. Its function is as follows. Binds to core histones and functions in the ATP-facilitated assembly of approximately regularly spaced nucleosomal arrays. May participate in parallel with other histone-binding proteins such as NAP-1. In terms of biological role, inactive for chromatin assembly. In vitro it appears to form a high molecular mass aggregate with the core histones. In Drosophila melanogaster (Fruit fly), this protein is Nucleoplasmin-like protein (Nlp).